The sequence spans 417 residues: Serine hydroxymethyltransferase (417 aa).

(6S)-5,6,7,8-tetrahydrofolate-binding positions include leucine 121 and 125-127; that span reads GHL. At lysine 229 the chain carries N6-(pyridoxal phosphate)lysine. 355 to 357 contributes to the (6S)-5,6,7,8-tetrahydrofolate binding site; the sequence is SPF.

The protein belongs to the SHMT family. Homodimer. Requires pyridoxal 5'-phosphate as cofactor.

Its subcellular location is the cytoplasm. It catalyses the reaction (6R)-5,10-methylene-5,6,7,8-tetrahydrofolate + glycine + H2O = (6S)-5,6,7,8-tetrahydrofolate + L-serine. It functions in the pathway one-carbon metabolism; tetrahydrofolate interconversion. It participates in amino-acid biosynthesis; glycine biosynthesis; glycine from L-serine: step 1/1. Catalyzes the reversible interconversion of serine and glycine with tetrahydrofolate (THF) serving as the one-carbon carrier. This reaction serves as the major source of one-carbon groups required for the biosynthesis of purines, thymidylate, methionine, and other important biomolecules. Also exhibits THF-independent aldolase activity toward beta-hydroxyamino acids, producing glycine and aldehydes, via a retro-aldol mechanism. This is Serine hydroxymethyltransferase from Shewanella denitrificans (strain OS217 / ATCC BAA-1090 / DSM 15013).